The sequence spans 425 residues: Histidine--tRNA ligase (425 aa).

Belongs to the class-II aminoacyl-tRNA synthetase family. In terms of assembly, homodimer.

Its subcellular location is the cytoplasm. The enzyme catalyses tRNA(His) + L-histidine + ATP = L-histidyl-tRNA(His) + AMP + diphosphate + H(+). This Aeromonas hydrophila subsp. hydrophila (strain ATCC 7966 / DSM 30187 / BCRC 13018 / CCUG 14551 / JCM 1027 / KCTC 2358 / NCIMB 9240 / NCTC 8049) protein is Histidine--tRNA ligase.